The following is a 1329-amino-acid chain: Synergin gamma (1329 aa).

A coiled-coil region spans residues 112 to 152; sequence MQKQFAEEQQKRFEQQQKLLEEERKRRQFEEQKQKLRLLSS. The tract at residues 175–211 is disordered; sequence GFSRDAKMHPTPASHPKKPDCPTSSHSTKTVSPSSAF. Residues 197–209 show a composition bias toward low complexity; sequence TSSHSTKTVSPSS. Positions 393–504 constitute an EH domain; that stretch reads NESLVPDAYK…TPVSQPTAMT (112 aa). The DFXDF motif 1 signature appears at 555-559; it reads DFQDF. S571 bears the Phosphoserine mark. Residues 578-594 show a composition bias toward polar residues; it reads VPASSKTSNSQHGNSAP. The tract at residues 578–600 is disordered; sequence VPASSKTSNSQHGNSAPSLLIPL. K609 bears the N6-acetyllysine mark. The interval 614-878 is interaction with AP1G1; that stretch reads KGISAEKPSE…ADFHSSKFSS (265 aa). Disordered stretches follow at residues 661–701 and 730–753; these read GTDD…TQTQ and AFST…PASL. S676 carries the post-translational modification Phosphoserine. The interval 761–773 is interaction with AP1G1, AP1G2 and GGA1; the sequence is LADDFGEFNLFGE. The DFXDF motif 2 motif lies at 785-789; sequence DFADF. The interval 797–835 is disordered; it reads IPSEPKADDKYEALREEGSPGALSTSTVEGAHNPPVSSS. Basic and acidic residues predominate over residues 801 to 814; sequence PKADDKYEALREEG. Phosphoserine is present on S815. K836 carries the N6-acetyllysine modification. 2 positions are modified to phosphoserine: S844 and S864. Disordered regions lie at residues 856–922, 941–1042, and 1088–1113; these read KENT…DSED, HVMS…FGEF, and SLSL…RDRS. Basic and acidic residues predominate over residues 864–873; the sequence is SDGDFADFHS. Residues 867–871 carry the DFXDF motif 3 motif; it reads DFADF. Low complexity predominate over residues 874–883; it reads SKFSSTSSDK. 9 positions are modified to phosphoserine: S904, S944, S947, S997, S1021, S1088, S1090, S1102, and S1113. Positions 944–955 are enriched in polar residues; the sequence is SDSSLDLPTVSG. The span at 1016-1028 shows a compositional bias: polar residues; the sequence is ENTCPSPASSVAS. The residue at position 1115 (T1115) is a Phosphothreonine.

As to quaternary structure, self-associates. Interacts with GGA1 (via GAE domain). Interacts with GGA2 and GGA3. Interacts with AP1G1 (via GAE domain), a subunit of adapter protein complex AP-1. Interacts with AP1G2 (via GAE domain) a subunit of adapter protein complex AP-1. Component of the aftiphilin/p200/gamma-synergin complex, at least composed of AFTPH/aftiphilin, HEATR5B/p200a and SYNRG/gamma-synergin, which plays a role in the AP1G1/AP-1-mediated trafficking of transferrin from early to recycling endosomes. Within the complex interacts with AFTPH/aftiphilin and HEATR5B/p200a; the interactions are direct. Interacts (via EH domain) with SCAMP1. Detected in brain and liver (at protein level). Ubiquitously expressed.

It is found in the cytoplasm. The protein resides in the golgi apparatus. The protein localises to the trans-Golgi network membrane. Its subcellular location is the perinuclear region. It localises to the cytoplasmic vesicle. It is found in the clathrin-coated vesicle. Its function is as follows. Plays a role in endocytosis and/or membrane trafficking at the trans-Golgi network (TGN). May act by linking the adapter protein complex AP-1 to other proteins. Component of clathrin-coated vesicles. Component of the aftiphilin/p200/gamma-synergin complex, which plays roles in AP1G1/AP-1-mediated protein trafficking including the trafficking of transferrin from early to recycling endosomes, and the membrane trafficking of furin and the lysosomal enzyme cathepsin D between the trans-Golgi network (TGN) and endosomes. The chain is Synergin gamma (Synrg) from Rattus norvegicus (Rat).